Here is a 154-residue protein sequence, read N- to C-terminus: 17.0 kDa class II heat shock protein (154 aa).

A sHSP domain is found at 39–154 (DARAMAATPA…KPKTIEIKVA (116 aa)).

It belongs to the small heat shock protein (HSP20) family.

It localises to the cytoplasm. In Zea mays (Maize), this protein is 17.0 kDa class II heat shock protein (HSP18).